Reading from the N-terminus, the 590-residue chain is V-type ATP synthase alpha chain (590 aa).

Position 232-239 (232-239 (GPFGSGKT)) interacts with ATP.

Belongs to the ATPase alpha/beta chains family.

The enzyme catalyses ATP + H2O + 4 H(+)(in) = ADP + phosphate + 5 H(+)(out). In terms of biological role, produces ATP from ADP in the presence of a proton gradient across the membrane. The V-type alpha chain is a catalytic subunit. The protein is V-type ATP synthase alpha chain of Thermoanaerobacter pseudethanolicus (strain ATCC 33223 / 39E) (Clostridium thermohydrosulfuricum).